The primary structure comprises 533 residues: MATSFRTASCWGLLSFKDISMEFTWDEWQLLDSTQKYLYRDVILENYHNLISVGYHGTKPDLIFKLEQGEDPWIINAKISRQSCPDGWEEWYQNNQDELESIERSYACSVLGRLNLSKTHDSSRQRLYNTRGKSLTQNSAPSRSYLRKNPDKFHGYEEPYFLKHQRAHSIEKNCVCSECGKAFRCKSQLIVHLRIHTGERPYECSKCERAFSAKSNLNAHQRVHTGEKPYSCSECEKVFSFRSQLIVHQEIHTGGKPYGCSECGKAYSWKSQLLLHQRSHTGVKPYECSECGKAFSLKSPFVVHQRTHTGVKPHKCSECGKAFRSKSYLLVHIRMHTGEKPYQCSDCGKAFNMKTQLIVHQGVHTGNNPYQCGECGKAFGRKEQLTAHLRAHAGEKPYGCSECGKAFSSKSYLVIHRRTHTGERPYECSLCERAFCGKSQLIIHQRTHSTEKPYECNECEKAYPRKASLQIHQKTHSGEKPFKCSECGKAFTQKSSLSEHQRVHTGEKPWKCSECGKSFCWNSGLRIHRKTHK.

The KRAB domain occupies L14 to P85. C2H2-type zinc fingers lie at residues C174–H196, Y202–H224, Y230–H252, Y258–H280, Y286–H308, H314–H336, Y342–H364, Y370–H392, Y398–H420, Y426–H448, Y454–H476, F482–H504, and W510–H532.

This sequence belongs to the krueppel C2H2-type zinc-finger protein family.

The protein resides in the nucleus. Functionally, may be involved in transcriptional regulation. This chain is Zinc finger protein 26 (ZNF26), found in Homo sapiens (Human).